The following is a 1235-amino-acid chain: ATP-dependent helicase/nuclease subunit A (1235 aa).

The 469-residue stretch at Thr3–Arg471 folds into the UvrD-like helicase ATP-binding domain. Residue Ala24–Thr31 coordinates ATP. One can recognise a UvrD-like helicase C-terminal domain in the interval Pro509–Gly808.

The protein belongs to the helicase family. AddA subfamily. In terms of assembly, heterodimer of AddA and AddB/RexB. Mg(2+) is required as a cofactor.

The catalysed reaction is Couples ATP hydrolysis with the unwinding of duplex DNA by translocating in the 3'-5' direction.. It catalyses the reaction ATP + H2O = ADP + phosphate + H(+). Its function is as follows. The heterodimer acts as both an ATP-dependent DNA helicase and an ATP-dependent, dual-direction single-stranded exonuclease. Recognizes the chi site generating a DNA molecule suitable for the initiation of homologous recombination. The AddA nuclease domain is required for chi fragment generation; this subunit has the helicase and 3' -&gt; 5' nuclease activities. The protein is ATP-dependent helicase/nuclease subunit A of Clostridium kluyveri (strain ATCC 8527 / DSM 555 / NBRC 12016 / NCIMB 10680 / K1).